The following is a 617-amino-acid chain: DNA mismatch repair protein MutL (617 aa).

It belongs to the DNA mismatch repair MutL/HexB family.

In terms of biological role, this protein is involved in the repair of mismatches in DNA. It is required for dam-dependent methyl-directed DNA mismatch repair. May act as a 'molecular matchmaker', a protein that promotes the formation of a stable complex between two or more DNA-binding proteins in an ATP-dependent manner without itself being part of a final effector complex. The protein is DNA mismatch repair protein MutL of Bartonella tribocorum (strain CIP 105476 / IBS 506).